The sequence spans 390 residues: GTPase Obg (390 aa).

The Obg domain maps to 1–159; that stretch reads MKFVDEAAIL…RELMLELLLL (159 aa). Residues 160 to 333 form the OBG-type G domain; that stretch reads ADVGMLGLPN…LCWDVMSFLN (174 aa). Residues 166-173, 191-195, 213-216, 283-286, and 314-316 contribute to the GTP site; these read GLPNAGKS, FTTLI, DIPG, NKID, and SAA. Residues Ser173 and Thr193 each contribute to the Mg(2+) site. Acidic residues predominate over residues 364 to 384; it reads VEAEAEDDWDDDWDEEDDDGV. The tract at residues 364–390 is disordered; it reads VEAEAEDDWDDDWDEEDDDGVEIIYER.

This sequence belongs to the TRAFAC class OBG-HflX-like GTPase superfamily. OBG GTPase family. As to quaternary structure, monomer. The cofactor is Mg(2+).

It is found in the cytoplasm. An essential GTPase which binds GTP, GDP and possibly (p)ppGpp with moderate affinity, with high nucleotide exchange rates and a fairly low GTP hydrolysis rate. Plays a role in control of the cell cycle, stress response, ribosome biogenesis and in those bacteria that undergo differentiation, in morphogenesis control. The polypeptide is GTPase Obg (Yersinia pestis).